The chain runs to 1370 residues: DNA-directed RNA polymerase subunit beta (1370 aa).

The protein belongs to the RNA polymerase beta chain family. As to quaternary structure, the RNAP catalytic core consists of 2 alpha, 1 beta, 1 beta' and 1 omega subunit. When a sigma factor is associated with the core the holoenzyme is formed, which can initiate transcription.

It catalyses the reaction RNA(n) + a ribonucleoside 5'-triphosphate = RNA(n+1) + diphosphate. Functionally, DNA-dependent RNA polymerase catalyzes the transcription of DNA into RNA using the four ribonucleoside triphosphates as substrates. In Geobacter sulfurreducens (strain ATCC 51573 / DSM 12127 / PCA), this protein is DNA-directed RNA polymerase subunit beta.